The following is a 66-amino-acid chain: DNA-directed RNA polymerase subunit Rpo10 (66 aa).

Residues C7, C10, C44, and C45 each contribute to the Zn(2+) site.

This sequence belongs to the archaeal Rpo10/eukaryotic RPB10 RNA polymerase subunit family. Part of the RNA polymerase complex. It depends on Zn(2+) as a cofactor.

Its subcellular location is the cytoplasm. It catalyses the reaction RNA(n) + a ribonucleoside 5'-triphosphate = RNA(n+1) + diphosphate. In terms of biological role, DNA-dependent RNA polymerase (RNAP) catalyzes the transcription of DNA into RNA using the four ribonucleoside triphosphates as substrates. The protein is DNA-directed RNA polymerase subunit Rpo10 of Saccharolobus islandicus (strain Y.N.15.51 / Yellowstone #2) (Sulfolobus islandicus).